The following is a 167-amino-acid chain: Seroin (167 aa).

The signal sequence occupies residues 1–17 (MATKILIFLSFVALSSA). N-linked (GlcNAc...) asparagine glycosylation is present at N26. 5 consecutive repeat copies span residues 38–46 (PPLPQPPPL), 56–64 (PPLPQPPPL), 76–78 (PPI), 79–81 (PPI), and 82–84 (PPI). The segment at 145–167 (VNETIVGDNPPKFEESRKESSSN) is disordered. N146 is a glycosylation site (N-linked (GlcNAc...) asparagine). Positions 155–167 (PKFEESRKESSSN) are enriched in basic and acidic residues.

As to expression, produced by both the posterior (PSG) and middle (MSG) sections of silk glands.

Its subcellular location is the secreted. In Galleria mellonella (Greater wax moth), this protein is Seroin.